The primary structure comprises 158 residues: MENQKQYPMTQEGYEKLEQELEELKTVKRPEVVEKIKVARSFGDLSENSEYDAAKDEQGFIEQDIQRIEHMIRNALIIEDNGDNNVVQIGKTVTFIELPGDEEESYQIVGSAEADAFKGKISNESPMAKALIGKGLNDQVRVPLPNGGEMNVKIVEIK.

A coiled-coil region spans residues 2 to 70 (ENQKQYPMTQ…IEQDIQRIEH (69 aa)).

This sequence belongs to the GreA/GreB family.

In terms of biological role, necessary for efficient RNA polymerase transcription elongation past template-encoded arresting sites. The arresting sites in DNA have the property of trapping a certain fraction of elongating RNA polymerases that pass through, resulting in locked ternary complexes. Cleavage of the nascent transcript by cleavage factors such as GreA or GreB allows the resumption of elongation from the new 3'terminus. GreA releases sequences of 2 to 3 nucleotides. This is Transcription elongation factor GreA from Staphylococcus epidermidis (strain ATCC 35984 / DSM 28319 / BCRC 17069 / CCUG 31568 / BM 3577 / RP62A).